Reading from the N-terminus, the 1462-residue chain is DNA polymerase III PolC-type (1462 aa).

In terms of domain architecture, Exonuclease spans 424 to 580 (YVVFDVETTG…YDAEATGRLL (157 aa)).

Belongs to the DNA polymerase type-C family. PolC subfamily.

The protein resides in the cytoplasm. The enzyme catalyses DNA(n) + a 2'-deoxyribonucleoside 5'-triphosphate = DNA(n+1) + diphosphate. Its function is as follows. Required for replicative DNA synthesis. This DNA polymerase also exhibits 3' to 5' exonuclease activity. The polypeptide is DNA polymerase III PolC-type (Streptococcus sanguinis (strain SK36)).